Here is a 473-residue protein sequence, read N- to C-terminus: Sensor histidine kinase GtrS (473 aa).

The Cytoplasmic portion of the chain corresponds to 1–8 (MPRSLLGR). Residues 9-29 (MLLLTLLAVLVAQGLSSLFWL) traverse the membrane as a helical segment. The Periplasmic segment spans residues 30 to 197 (SHLRSSQREG…LEPEGLQPQQ (168 aa)). A helical transmembrane segment spans residues 198 to 218 (VLSIVFTSLLLLLFTGLLMHW). Residues 217 to 269 (HWQSRPLKRLARAARDLALGSPSAALEERGASELVEVARAFNTMHERIDRYLN) enclose the HAMP domain. The Cytoplasmic segment spans residues 219 to 473 (QSRPLKRLAR…SLRLPRLGLE (255 aa)). Residues 277 to 471 (AISHDLRTPI…RVSLRLPRLG (195 aa)) form the Histidine kinase domain. H280 bears the Phosphohistidine; by autocatalysis mark.

Post-translationally, autophosphorylated.

The protein localises to the cell inner membrane. It carries out the reaction ATP + protein L-histidine = ADP + protein N-phospho-L-histidine.. In terms of biological role, member of the two-component regulatory system GtrS/GltR involved in the regulation of glucose metabolism and transport, as well as regulation of the exotoxin A gene expression. GtrS recognizes and binds 2-ketogluconate and 6-phosphogluconate via its sensor domain, which accelerates GtrS autophosphorylation and concomitant transphosphorylation and regulation of the response regulator GltR. Its function is as follows. Plays a key role during bacteria-host interactions and is required for optimal colonization and dissemination in a mouse model of infection. Contributes to modulation of the type III secretion system (T3SS) in response to host cells via the regulation of the OprB transport system. The sequence is that of Sensor histidine kinase GtrS from Pseudomonas aeruginosa (strain ATCC 15692 / DSM 22644 / CIP 104116 / JCM 14847 / LMG 12228 / 1C / PRS 101 / PAO1).